Consider the following 952-residue polypeptide: Meiosis-specific coiled-coil domain-containing protein MEIOC (952 aa).

3 disordered regions span residues 1–23 (MEVRRGDTCPRPHPSGLREEGLE), 609–629 (QAKPQSGHYDPEEGPKHLDGL), and 933–952 (VHESINSSNPMNQRGETNKH). The segment covering 617 to 627 (YDPEEGPKHLD) has biased composition (basic and acidic residues). Polar residues predominate over residues 936 to 952 (SINSSNPMNQRGETNKH).

As to quaternary structure, interacts with YTHDC2; binds transcript that regulate the mitotic cell cycle inhibiting progression into metaphase, thereby allowing meiotic prophase to proceed normally. Interacts with RBM46. Expressed in fetal ovaries. Expressed in testis.

The protein resides in the cytoplasm. Its subcellular location is the nucleus. Its function is as follows. Is required for meiosis completion in both male and female germ cells. Confers stability to numerous meiotic mRNAs in gonads allowing proper initiation and progression into meiosis prophase I. The function may involve YTHDC2 and is independent of induction by retinoic acid (RA). Maintains an extended meiotic prophase I by properly promoting the transition from a mitotic to a meiotic cell cycle program by binding transcripts through its interaction with YTHDC2 that regulate the mitotic cell cycle. The chain is Meiosis-specific coiled-coil domain-containing protein MEIOC from Homo sapiens (Human).